The sequence spans 479 residues: Catalase easC (479 aa).

Residues 1-13 (MASQVSLTAQGSG) show a composition bias toward polar residues. The segment at 1–28 (MASQVSLTAQGSGLSAPLNGPEHLTSTT) is disordered. Residue histidine 53 is part of the active site. Position 343 (tyrosine 343) interacts with heme. The disordered stretch occupies residues 365–385 (HAANDAPKTKKPAVPLQKQSR).

Belongs to the catalase family. The cofactor is heme.

It functions in the pathway alkaloid biosynthesis; ergot alkaloid biosynthesis. Functionally, catalase; part of the gene cluster that mediates the biosynthesis of fungal ergot alkaloid. DmaW catalyzes the first step of ergot alkaloid biosynthesis by condensing dimethylallyl diphosphate (DMAP) and tryptophan to form 4-dimethylallyl-L-tryptophan. The second step is catalyzed by the methyltransferase easF that methylates 4-dimethylallyl-L-tryptophan in the presence of S-adenosyl-L-methionine, resulting in the formation of 4-dimethylallyl-L-abrine. The catalase easC and the FAD-dependent oxidoreductase easE then transform 4-dimethylallyl-L-abrine to chanoclavine-I which is further oxidized by easD in the presence of NAD(+), resulting in the formation of chanoclavine-I aldehyde. Agroclavine dehydrogenase easG then mediates the conversion of chanoclavine-I aldehyde to agroclavine via a non-enzymatic adduct reaction: the substrate is an iminium intermediate that is formed spontaneously from chanoclavine-I aldehyde in the presence of glutathione. Further conversion of agroclavine to paspalic acid is a two-step process involving oxidation of agroclavine to elymoclavine and of elymoclavine to paspalic acid, the second step being performed by the elymoclavine oxidase cloA. However, cloA does not encode a functional enzyme indicating that C.fusiformis terminates its ergot alkaloid pathway at elymoclavine. In Claviceps fusiformis (Ergot fungus), this protein is Catalase easC.